A 181-amino-acid chain; its full sequence is DKIPDFVVPGKCASVDRNKLWAEQTPNRNSYAGVWYQFALTNNPYQLIEKCVRNEYSFDGKQFVIKSTGIAYDGNLLKRNGKLYPNPFGEPHLSIDYENSFAAPLVILETDYSNYACLYSCIDYNFGYHSDFSFIFSRSANLADQYVKKCEAAFKNINVDTTRFVKTVQGSSCPYDTQKTL.

Disulfide bonds link Cys12–Cys121, Cys51–Cys173, and Cys117–Cys150.

This sequence belongs to the calycin superfamily. Lipocalin family. Oligomer; Can form dimers (beta-crustacyanin); or complexes of 16 subunits (alpha-crustacyanin). There are five types of subunits: A1, A2, A3, C1 and C2. In terms of tissue distribution, found in the carapace.

It is found in the secreted. The protein localises to the extracellular space. Its function is as follows. Binds the carotenoid astaxanthin (AXT) which provides the blue coloration to the carapace of the lobster. The sequence is that of Crustacyanin-C1 subunit from Homarus gammarus (European lobster).